Reading from the N-terminus, the 477-residue chain is Glutamate--tRNA ligase 2 (477 aa).

The 'HIGH' region motif lies at 9 to 19; the sequence is PSPTGFLHIGG. Positions 238 to 242 match the 'KMSKS' region motif; it reads KLSKR. K241 is an ATP binding site.

Belongs to the class-I aminoacyl-tRNA synthetase family. Glutamate--tRNA ligase type 1 subfamily. As to quaternary structure, monomer.

The protein resides in the cytoplasm. The catalysed reaction is tRNA(Glu) + L-glutamate + ATP = L-glutamyl-tRNA(Glu) + AMP + diphosphate. Functionally, catalyzes the attachment of glutamate to tRNA(Glu) in a two-step reaction: glutamate is first activated by ATP to form Glu-AMP and then transferred to the acceptor end of tRNA(Glu). The polypeptide is Glutamate--tRNA ligase 2 (Paramagnetospirillum magneticum (strain ATCC 700264 / AMB-1) (Magnetospirillum magneticum)).